A 376-amino-acid polypeptide reads, in one-letter code: Fibromodulin (376 aa).

Residues 1 to 18 (MQWASILLLRGLCSLSQG) form the signal peptide. Q19 carries the post-translational modification Pyrrolidone carboxylic acid. A sulfotyrosine mark is found at Y20, Y38, Y53, Y55, Y63, and Y65. The LRRNT domain maps to 67 to 105 (APPPPEPRDCPQECDCPPNFPTAMYCDNRNLKYLPFVPS). LRR repeat units follow at residues 106-127 (RMKY…VFDN), 130-143 (GLLW…QITS), 156-176 (HLER…PLPR), 177-198 (SLRE…ALEG), 201-222 (NLTA…MRGL), 224-245 (SLIL…LPSA), 246-266 (LEQL…YFRG), and 269-289 (KLLY…ATNT). An N-linked (GlcNAc...) (keratan sulfate) asparagine glycan is attached at N127. The N-linked (GlcNAc...) (keratan sulfate) asparagine glycan is linked to N166. N-linked (GlcNAc...) (keratan sulfate) asparagine glycosylation is present at N201. N291 carries an N-linked (GlcNAc...) (keratan sulfate) asparagine glycan. 2 LRR repeats span residues 294 to 315 (SLLE…NTNL) and 316 to 335 (ENLY…SFCT). C334 and C367 are oxidised to a cystine. N-linked (GlcNAc...) asparagine glycosylation occurs at N341. The stretch at 344–367 (KLQVLRLDGNEIKRSAMPVDAPLC) is one LRR 11 repeat.

It belongs to the small leucine-rich proteoglycan (SLRP) family. SLRP class II subfamily. As to quaternary structure, binds to type I and type II collagen. Post-translationally, binds keratan sulfate chains.

Its subcellular location is the secreted. It localises to the extracellular space. The protein resides in the extracellular matrix. In terms of biological role, affects the rate of fibrils formation. May have a primary role in collagen fibrillogenesis. The chain is Fibromodulin (Fmod) from Rattus norvegicus (Rat).